Reading from the N-terminus, the 418-residue chain is Tyrosine--tRNA ligase 1 (418 aa).

Tyrosine 34 serves as a coordination point for L-tyrosine. Positions 39 to 48 (PTADSLHIGH) match the 'HIGH' region motif. The L-tyrosine site is built by tyrosine 169 and glutamine 173. Positions 230–234 (KFGKT) match the 'KMSKS' region motif. Lysine 233 is a binding site for ATP. Positions 352 to 418 (TVLIDLLVES…GKKKYFLIRY (67 aa)) constitute an S4 RNA-binding domain.

This sequence belongs to the class-I aminoacyl-tRNA synthetase family. TyrS type 1 subfamily. Homodimer.

It localises to the cytoplasm. The enzyme catalyses tRNA(Tyr) + L-tyrosine + ATP = L-tyrosyl-tRNA(Tyr) + AMP + diphosphate + H(+). Its function is as follows. Catalyzes the attachment of tyrosine to tRNA(Tyr) in a two-step reaction: tyrosine is first activated by ATP to form Tyr-AMP and then transferred to the acceptor end of tRNA(Tyr). This is Tyrosine--tRNA ligase 1 from Bacillus cereus (strain ATCC 10987 / NRS 248).